A 62-amino-acid polypeptide reads, in one-letter code: uncharacterized protein (62 aa).

Its subcellular location is the mitochondrion. This is an uncharacterized protein from Marchantia polymorpha (Common liverwort).